The following is a 745-amino-acid chain: Meiotic driver SPOK3 (745 aa).

Residues 4–34 (KDRITQLLRELEEAKAREAQERCEKERLQLE) are a coiled coil. 2 disordered regions span residues 173–222 (ELTQ…DGVG) and 407–487 (LSSA…VDPQ). Residues 188–197 (TSDRSLERRQ) show a composition bias toward basic and acidic residues. Polar residues-rich tracts occupy residues 208–217 (KSKYICSNRQ) and 409–422 (SAPS…SEYT). Positions 214-325 (SNRQPDGVGI…LLLYVDRDDW (112 aa)) are required for antidote activity. A compositionally biased stretch (basic and acidic residues) spans 466-482 (AKRERGPSSGGKDDGRS). A required for poison activity region spans residues 491-745 (QYCTQACLLG…SPMATPSHGG (255 aa)).

It is found in the cytoplasm. The protein resides in the nucleus. Functionally, promotes unequal transmission of alleles from the parental zygote to progeny spores by acting as poison/antidote system, leading to poisoning of progeny that do not inherit the allele. May possess DNA nuclease activity that leads to spore killing, and a kinase activity that confers resistance to the nuclease activity. The protein is Meiotic driver SPOK3 of Podospora anserina (Pleurage anserina).